The primary structure comprises 372 residues: MNLEEENTIFKPLYSLKHSPINAYFSKNSDDFVVRERPLYEFSGKGEHLILHINKKDLTTNEALKILSETSGVKIRDFGYAGLKDKQGSTFQYLSMPKKFESFLSNFSHPKLKILEIFTHENKLRIGHLKGNTFFIRLKKVLPSDALKLEQALMNLDKQGFANYFGYQRFGKFGDNYKEGFEILRGKKMKNVKMKEFLISAFQSELFNRYLSKRVELSHFANDFSEKELIQIYKISKEEAKELKKQEQFFKLLKGEVLGHYPFGKCFLCEDLSAELERFKARDISAMGLLIGAKAYETGEGLALNLENEIFKDALEFKAKMQGSRRFMWGYLEELKWRYDEEKAHFCIEFFLQKGSYATVVLEEILHKNLFE.

Residue D85 is the Nucleophile of the active site. The TRUD domain maps to 160-330; sequence GFANYFGYQR…MQGSRRFMWG (171 aa).

This sequence belongs to the pseudouridine synthase TruD family.

The catalysed reaction is uridine(13) in tRNA = pseudouridine(13) in tRNA. In terms of biological role, responsible for synthesis of pseudouridine from uracil-13 in transfer RNAs. The chain is tRNA pseudouridine synthase D from Campylobacter jejuni subsp. jejuni serotype O:6 (strain 81116 / NCTC 11828).